The primary structure comprises 294 residues: Probable endonuclease 4 (294 aa).

Positions 78, 118, 157, 191, 194, 228, 241, 243, and 273 each coordinate Zn(2+).

Belongs to the AP endonuclease 2 family. Requires Zn(2+) as cofactor.

The enzyme catalyses Endonucleolytic cleavage to 5'-phosphooligonucleotide end-products.. Endonuclease IV plays a role in DNA repair. It cleaves phosphodiester bonds at apurinic or apyrimidinic (AP) sites, generating a 3'-hydroxyl group and a 5'-terminal sugar phosphate. The chain is Probable endonuclease 4 from Streptomyces coelicolor (strain ATCC BAA-471 / A3(2) / M145).